The chain runs to 27 residues: Snake venom serine protease Afaacytin alpha/beta/beta' chains (27 aa).

Residues 1–27 (VIGGAECNINEHRSLVLLYXSSSXFGE) enclose the Peptidase S1 domain.

It belongs to the peptidase S1 family. Snake venom subfamily. In terms of assembly, heterodimer of an alpha and a beta chain. Subunit beta is constituted of two disulfide-linked polypeptidic chains, beta and beta'. Calcium appears to be required for structural cohesion of the molecule. In terms of processing, both chains alpha and beta are N-glycosylated. As to expression, expressed by the venom gland.

It localises to the secreted. Its activity is regulated as follows. Inhibited by diisopropylfluorophosphate (DFP), benzamidine, heparin and hirudin, but not by plasmatic thrombin inhibitors, antithrombin-III and ecotin. In terms of biological role, snake venom serine protease that exhibits alpha-fibrinase and beta-fibrinogenase activities. It replaces missing factors VIII (F8) and IX (F9) in deficient plasmas by activating purified human factor X (F10) into factor Xa. It releases serotonin from platelets and induces platelet aggregation in human (but not in rabbit). Has caseinolytic, arginine-esterase and amidase activities. This Cerastes cerastes (Horned desert viper) protein is Snake venom serine protease Afaacytin alpha/beta/beta' chains.